We begin with the raw amino-acid sequence, 777 residues long: CRISPR system single-strand-specific deoxyribonuclease Cas10/Csm1 (subtype III-A) (777 aa).

One can recognise an HD domain in the interval 1 to 106 (MEIDELTALG…VYEADNLASG (106 aa)). The GGDEF domain maps to 513-660 (RRLGVMKGDV…GRNRVFVVGR (148 aa)).

It belongs to the CRISPR-associated Cas10/Csm1 family. As to quaternary structure, probably part of the Csm effector complex, that includes Cas10, Csm2, Csm3, Csm4, Csm5 and mature crRNA. Will form a homodimer in solution, interacts with Csm4, which is a tighter, better association than the homodimeric Cas10 and uses the same interface for interaction. Requires a divalent metal cation as cofactor.

SsDNase activity is inhibited by EDTA. Its function is as follows. CRISPR (clustered regularly interspaced short palindromic repeat) is an adaptive immune system that provides protection against mobile genetic elements (viruses, transposable elements and conjugative plasmids). CRISPR clusters contain spacers, sequences complementary to antecedent mobile elements, and target invading nucleic acids. CRISPR clusters are transcribed and processed into CRISPR RNA (crRNA). The type III-A Csm effector complex binds crRNA and acts as a crRNA-guided RNase, DNase and cyclic oligoadenylate synthase; binding of target RNA cognate to the crRNA is required for all activities. In terms of biological role, a single-strand deoxyribonuclease (ssDNase) which digests linear and circular ssDNA; has 5'-3' and 3'-5' exonuclease activity as well as a less efficient endonuclease activity. Has a minimal size requirement; 100 nucleotide ssDNA (nt) is more efficiently digested than 50 or 25 nt ssDNA, while 14 nt ssDNA is not cleaved at all. It has no activity on dsDNA or ssRNA. SsDNase activity is stimulated in the ternary Csm effector complex; binding of cognate target RNA activates the ssDNase, as the target RNA is degraded ssDNA activity decreases. Functionally, when associated with the ternary Csm effector complex (the crRNA, Cas proteins and a cognate target ssRNA) synthesizes cyclic oligoadenylates (cOA) from ATP. cOAs are second messengers that stimulate the ssRNase activity of Csm6, inducing an antiviral state important for defense against invading nucleic acids. This Thermococcus onnurineus (strain NA1) protein is CRISPR system single-strand-specific deoxyribonuclease Cas10/Csm1 (subtype III-A).